The sequence spans 149 residues: MADSLTEEQVSEYKEAFSLFDKDGDGQITTKELGTVMRSLGQNPSESELQDMINEVDADNNGTIDFPEFLTMMARKMKDTDSEEEIREAFKVFDRDNNGFISAAELRHVMTSIGEKLTDDEVDEMIREADQDGDGRIDYNEFVQLMMQK.

An N-acetylalanine modification is found at Ala2. EF-hand domains lie at Glu8–Asn43, Pro44–Asp79, Asp81–Lys116, and Leu117–Lys149. Ca(2+) contacts are provided by Asp21, Asp23, Asp25, Gln27, Glu32, Asp57, Asp59, Asn61, Thr63, Glu68, Asp94, Asp96, Asn98, Glu105, Asp130, Asp132, Asp134, Arg136, and Glu141.

Belongs to the calmodulin family.

Calmodulin mediates the control of a large number of enzymes, ion channels and other proteins by Ca(2+). Among the enzymes to be stimulated by the calmodulin-Ca(2+) complex are a number of protein kinases and phosphatases. The sequence is that of Calmodulin (camA) from Emericella nidulans (strain FGSC A4 / ATCC 38163 / CBS 112.46 / NRRL 194 / M139) (Aspergillus nidulans).